The chain runs to 362 residues: Severin (362 aa).

Residues phenylalanine 53 to glycine 102 form a Gelsolin-like 1 repeat. Arginine 162–lysine 170 is a binding site for a 1,2-diacyl-sn-glycero-3-phospho-(1D-myo-inositol-4,5-bisphosphate). Gelsolin-like repeat units follow at residues alanine 172–asparagine 212 and leucine 280–lysine 323.

The protein belongs to the villin/gelsolin family.

Severin blocks the ends of F-actin and causes the fragmentation and depolymerization of actin filaments in a Ca(2+) dependent manner. In Dictyostelium discoideum (Social amoeba), this protein is Severin (sevA).